Consider the following 235-residue polypeptide: Geranylgeranylglyceryl phosphate synthase (235 aa).

Residue lysine 13 participates in sn-glycerol 1-phosphate binding. 2 residues coordinate Mg(2+): aspartate 15 and threonine 42. Sn-glycerol 1-phosphate is bound by residues 162 to 167, glycine 192, and 212 to 213; these read YVEYSG and GD.

The protein belongs to the GGGP/HepGP synthase family. Group I subfamily. Requires Mg(2+) as cofactor.

The protein localises to the cytoplasm. The catalysed reaction is sn-glycerol 1-phosphate + (2E,6E,10E)-geranylgeranyl diphosphate = sn-3-O-(geranylgeranyl)glycerol 1-phosphate + diphosphate. Its pathway is membrane lipid metabolism; glycerophospholipid metabolism. In terms of biological role, prenyltransferase that catalyzes the transfer of the geranylgeranyl moiety of geranylgeranyl diphosphate (GGPP) to the C3 hydroxyl of sn-glycerol-1-phosphate (G1P). This reaction is the first ether-bond-formation step in the biosynthesis of archaeal membrane lipids. This chain is Geranylgeranylglyceryl phosphate synthase, found in Natronomonas pharaonis (strain ATCC 35678 / DSM 2160 / CIP 103997 / JCM 8858 / NBRC 14720 / NCIMB 2260 / Gabara) (Halobacterium pharaonis).